We begin with the raw amino-acid sequence, 828 residues long: Periplasmic nitrate reductase (828 aa).

A signal peptide (tat-type signal) is located at residues 1–31 (MKLSRRSFMKANAVAAAAAAAGLSVPGVARA). In terms of domain architecture, 4Fe-4S Mo/W bis-MGD-type spans 39 to 95 (IKWDKAPCRFCGTGCGVLVGTQQGRVVACQGDPDAPVNRGLNCIKGYFLPKIMYGKD). Residues Cys46, Cys49, Cys53, and Cys81 each coordinate [4Fe-4S] cluster. Mo-bis(molybdopterin guanine dinucleotide)-binding positions include Lys83, Gln150, Asn175, Cys179, 212-219 (WGSNMAEM), 243-247 (STYQH), 262-264 (QSD), Met372, Gln376, Asn482, 508-509 (SD), Lys531, Asp558, and 718-727 (TGRVLEHWHT). Position 794 (Phe794) interacts with substrate. 2 residues coordinate Mo-bis(molybdopterin guanine dinucleotide): Asn802 and Lys819.

Belongs to the prokaryotic molybdopterin-containing oxidoreductase family. NasA/NapA/NarB subfamily. In terms of assembly, component of the periplasmic nitrate reductase NapAB complex composed of NapA and NapB. [4Fe-4S] cluster serves as cofactor. Requires Mo-bis(molybdopterin guanine dinucleotide) as cofactor. In terms of processing, predicted to be exported by the Tat system. The position of the signal peptide cleavage has not been experimentally proven.

It localises to the periplasm. It catalyses the reaction 2 Fe(II)-[cytochrome] + nitrate + 2 H(+) = 2 Fe(III)-[cytochrome] + nitrite + H2O. Its function is as follows. Catalytic subunit of the periplasmic nitrate reductase complex NapAB. Receives electrons from NapB and catalyzes the reduction of nitrate to nitrite. This is Periplasmic nitrate reductase from Escherichia coli O81 (strain ED1a).